The chain runs to 164 residues: UPF0304 protein YfbU (164 aa).

Belongs to the UPF0304 family.

This chain is UPF0304 protein YfbU, found in Salmonella enteritidis PT4 (strain P125109).